Reading from the N-terminus, the 330-residue chain is Phenylalanine--tRNA ligase alpha subunit (330 aa).

Glu246 is a binding site for Mg(2+).

Belongs to the class-II aminoacyl-tRNA synthetase family. Phe-tRNA synthetase alpha subunit type 1 subfamily. As to quaternary structure, tetramer of two alpha and two beta subunits. Mg(2+) is required as a cofactor.

The protein localises to the cytoplasm. The catalysed reaction is tRNA(Phe) + L-phenylalanine + ATP = L-phenylalanyl-tRNA(Phe) + AMP + diphosphate + H(+). This is Phenylalanine--tRNA ligase alpha subunit from Wolinella succinogenes (strain ATCC 29543 / DSM 1740 / CCUG 13145 / JCM 31913 / LMG 7466 / NCTC 11488 / FDC 602W) (Vibrio succinogenes).